Consider the following 476-residue polypeptide: Mitochondrial-processing peptidase subunit beta (476 aa).

The transit peptide at 1-28 (MASRRLALNLAQGVKARAGGVINPFRRG) directs the protein to the mitochondrion. Position 84 (His84) interacts with Zn(2+). Catalysis depends on Glu87, which acts as the Proton acceptor. Zn(2+) contacts are provided by His88 and Glu164.

Belongs to the peptidase M16 family. As to quaternary structure, heterodimer of mpp (alpha) and pep (beta) subunits, forming the mitochondrial processing protease (MPP) in which mpp is involved in substrate recognition and binding and pep is the catalytic subunit. Component of the ubiquinol-cytochrome c oxidoreductase (cytochrome b-c1 complex, complex III, CIII), a multisubunit enzyme composed of 10 subunits. The complex is composed of 3 respiratory subunits cytochrome b (cob), cytochrome c1 (cyt-1) and Rieske protein (fes-1), 2 core protein subunits pep and ucr-1, and 5 low-molecular weight protein subunits qcr6, qcr7, qcr8, qcr9 and probably NCU16844/qcr10. The complex exists as an obligatory dimer and forms supercomplexes (SCs) in the inner mitochondrial membrane with NADH-ubiquinone oxidoreductase (complex I, CI) and cytochrome c oxidase (complex IV, CIV), resulting in different assemblies (supercomplexes SCI(1)III(2), SCIII(2)IV(1) and SCIII(2)IV(2) as well as higher order I(x)III(y)IV(z) megacomplexes). Zn(2+) serves as cofactor.

It is found in the mitochondrion matrix. The protein localises to the mitochondrion inner membrane. It catalyses the reaction Release of N-terminal transit peptides from precursor proteins imported into the mitochondrion, typically with Arg in position P2.. Binding to mpp is required for catalytic activity. Inhibited by metal chelator ethylenediaminetetraacetic acid (EDTA). Its function is as follows. Catalytic subunit of the essential mitochondrial processing protease (MPP), which cleaves the mitochondrial sequence off newly imported precursors proteins. Preferentially, cleaves after an arginine at position P2. Component of the ubiquinol-cytochrome c oxidoreductase, a multisubunit transmembrane complex that is part of the mitochondrial electron transport chain which drives oxidative phosphorylation. The respiratory chain contains 3 multisubunit complexes succinate dehydrogenase (complex II, CII), ubiquinol-cytochrome c oxidoreductase (cytochrome b-c1 complex, complex III, CIII) and cytochrome c oxidase (complex IV, CIV), that cooperate to transfer electrons derived from NADH and succinate to molecular oxygen, creating an electrochemical gradient over the inner membrane that drives transmembrane transport and the ATP synthase. The cytochrome b-c1 complex catalyzes electron transfer from ubiquinol to cytochrome c, linking this redox reaction to translocation of protons across the mitochondrial inner membrane, with protons being carried across the membrane as hydrogens on the quinol. In the process called Q cycle, 2 protons are consumed from the matrix, 4 protons are released into the intermembrane space and 2 electrons are passed to cytochrome c. The chain is Mitochondrial-processing peptidase subunit beta from Neurospora crassa (strain ATCC 24698 / 74-OR23-1A / CBS 708.71 / DSM 1257 / FGSC 987).